The chain runs to 435 residues: Trigger factor (435 aa).

The 86-residue stretch at 163–248 (GDTVTIDFDG…IHEIKTKELP (86 aa)) folds into the PPIase FKBP-type domain.

This sequence belongs to the FKBP-type PPIase family. Tig subfamily.

Its subcellular location is the cytoplasm. It catalyses the reaction [protein]-peptidylproline (omega=180) = [protein]-peptidylproline (omega=0). Its function is as follows. Involved in protein export. Acts as a chaperone by maintaining the newly synthesized protein in an open conformation. Functions as a peptidyl-prolyl cis-trans isomerase. This is Trigger factor from Pediococcus pentosaceus (strain ATCC 25745 / CCUG 21536 / LMG 10740 / 183-1w).